Here is a 180-residue protein sequence, read N- to C-terminus: ADP-ribosylation factor 4 (180 aa).

Gly-2 carries N-myristoyl glycine lipidation. GTP contacts are provided by residues 24–31 (GLDAAGKT), 67–71 (DVGGQ), and 126–129 (NKQD).

It belongs to the small GTPase superfamily. Arf family.

It is found in the golgi apparatus. GTP-binding protein involved in protein trafficking; may modulate vesicle budding and uncoating within the Golgi apparatus. May be involved in ciliogenesis. The chain is ADP-ribosylation factor 4 (arf4) from Xenopus laevis (African clawed frog).